The sequence spans 700 residues: Elongation factor G 2 (700 aa).

The 283-residue stretch at 8–290 (ERYRNIGISA…AVIDFLPSPV (283 aa)) folds into the tr-type G domain. Residues 17-24 (AHIDAGKT), 88-92 (DTPGH), and 142-145 (NKMD) each bind GTP.

Belongs to the TRAFAC class translation factor GTPase superfamily. Classic translation factor GTPase family. EF-G/EF-2 subfamily.

It is found in the cytoplasm. Its function is as follows. Catalyzes the GTP-dependent ribosomal translocation step during translation elongation. During this step, the ribosome changes from the pre-translocational (PRE) to the post-translocational (POST) state as the newly formed A-site-bound peptidyl-tRNA and P-site-bound deacylated tRNA move to the P and E sites, respectively. Catalyzes the coordinated movement of the two tRNA molecules, the mRNA and conformational changes in the ribosome. This chain is Elongation factor G 2, found in Burkholderia mallei (strain ATCC 23344).